The sequence spans 585 residues: Archaeosine synthase (585 aa).

The PUA domain maps to 516–584 (TKTVEIDGFV…IGVEIRHVEE (69 aa)).

It belongs to the archaeosine synthase type 1 family. In terms of assembly, homodimer.

It carries out the reaction 7-cyano-7-carbaguanosine(15) in tRNA + L-glutamine + H2O = archaeosine(15) in tRNA + L-glutamate. It functions in the pathway tRNA modification; archaeosine-tRNA biosynthesis. Is responsible for the final step in the biosynthesis of archaeosine, a modified nucleoside present in the dihydrouridine loop (D-loop) of archaeal tRNA. Catalyzes the conversion of 7-cyano-7-deazaguanine (preQ0)-modified tRNA to archaeosine-tRNA, transforming a nitrile group to a formamidine group. This Haloferax volcanii (strain ATCC 29605 / DSM 3757 / JCM 8879 / NBRC 14742 / NCIMB 2012 / VKM B-1768 / DS2) (Halobacterium volcanii) protein is Archaeosine synthase.